We begin with the raw amino-acid sequence, 222 residues long: PKHD-type hydroxylase P9301_13621 (222 aa).

The 95-residue stretch at 81–175 folds into the Fe2OG dioxygenase domain; that stretch reads KIHGIMFTKS…RLVCVGWIES (95 aa). Positions 99, 101, and 156 each coordinate Fe cation. Residue Arg166 participates in 2-oxoglutarate binding.

Fe(2+) serves as cofactor. It depends on L-ascorbate as a cofactor.

The polypeptide is PKHD-type hydroxylase P9301_13621 (Prochlorococcus marinus (strain MIT 9301)).